The sequence spans 750 residues: Ribosomal RNA large subunit methyltransferase K/L (750 aa).

The THUMP domain maps to Thr-46–Leu-157.

It belongs to the methyltransferase superfamily. RlmKL family.

It localises to the cytoplasm. The catalysed reaction is guanosine(2445) in 23S rRNA + S-adenosyl-L-methionine = N(2)-methylguanosine(2445) in 23S rRNA + S-adenosyl-L-homocysteine + H(+). It carries out the reaction guanosine(2069) in 23S rRNA + S-adenosyl-L-methionine = N(2)-methylguanosine(2069) in 23S rRNA + S-adenosyl-L-homocysteine + H(+). Functionally, specifically methylates the guanine in position 2445 (m2G2445) and the guanine in position 2069 (m7G2069) of 23S rRNA. The chain is Ribosomal RNA large subunit methyltransferase K/L from Pseudomonas syringae pv. tomato (strain ATCC BAA-871 / DC3000).